We begin with the raw amino-acid sequence, 358 residues long: Magnesium-protoporphyrin IX monomethyl ester [oxidative] cyclase (358 aa).

It belongs to the AcsF family. Fe cation is required as a cofactor.

The enzyme catalyses Mg-protoporphyrin IX 13-monomethyl ester + 3 NADPH + 3 O2 + 2 H(+) = 3,8-divinyl protochlorophyllide a + 3 NADP(+) + 5 H2O. It participates in porphyrin-containing compound metabolism; chlorophyll biosynthesis (light-independent). Catalyzes the formation of the isocyclic ring in chlorophyll biosynthesis. Mediates the cyclase reaction, which results in the formation of divinylprotochlorophyllide (Pchlide) characteristic of all chlorophylls from magnesium-protoporphyrin IX 13-monomethyl ester (MgPMME). The polypeptide is Magnesium-protoporphyrin IX monomethyl ester [oxidative] cyclase (Synechococcus elongatus (strain ATCC 33912 / PCC 7942 / FACHB-805) (Anacystis nidulans R2)).